A 63-amino-acid polypeptide reads, in one-letter code: UPF0337 protein PSPTO_1596 (63 aa).

The segment at 20 to 63 (KQAVGKATDNTKLQAEGKAQELKGEGQQAKGEVKDAVKKGVDKV) is disordered. Over residues 50-63 (GEVKDAVKKGVDKV) the composition is skewed to basic and acidic residues.

This sequence belongs to the UPF0337 (CsbD) family.

This Pseudomonas syringae pv. tomato (strain ATCC BAA-871 / DC3000) protein is UPF0337 protein PSPTO_1596.